Here is a 242-residue protein sequence, read N- to C-terminus: Cell division protein FtsQ (242 aa).

Over 1 to 12 (MWDNAEAMERLT) the chain is Cytoplasmic. A helical transmembrane segment spans residues 13-32 (RWLLVMMAMLLAASGLVWFY). At 33–242 (NSNHLPVKQV…DGLPEKESEE (210 aa)) the chain is on the periplasmic side. The region spanning 37–106 (LPVKQVSLKG…DTVEVVLTER (70 aa)) is the POTRA domain.

Belongs to the FtsQ/DivIB family. FtsQ subfamily. Part of a complex composed of FtsB, FtsL and FtsQ.

It is found in the cell inner membrane. Its function is as follows. Essential cell division protein. May link together the upstream cell division proteins, which are predominantly cytoplasmic, with the downstream cell division proteins, which are predominantly periplasmic. May control correct divisome assembly. This chain is Cell division protein FtsQ, found in Neisseria gonorrhoeae (strain ATCC 700825 / FA 1090).